Here is a 454-residue protein sequence, read N- to C-terminus: MQATPRPLALIVLAAGAGTRMNSDLPKPLHTLGSAPLVAHTIAAGASLEPARLVVITGHGADEVEAVLQDIAPEAVTARQTPQLGTGHAVLQAAAALEGFEGDAMVLYGDSPFFTSETLQAMRIARAAHDVVMLGFRPADPGRYGRLVMDGDTLRKIVEFKDATPEEREITFCNSGVLCADAATLMTLLAQLTNDNAAGEYYLTDVPELAGNAGLTATAIACDEAETIGINSRAELVRAEAQFQSQRRAALIEAGVTMQAPDSVHFALDTHIGRDAVIEPYVVFGADVTVESGAQIRAFSHLEGCHISAGAIVGPYARLRPGAEIGNNAKVGNFVEVKAADIAEGAKVNHLSYIGDATVGERANIGAGTVTCNYDGVMKHRTDIGADAFIGSDTMLVAPVTVGAGAMTASGSTITEDVPDGALALGRAKQVNKPGLATKLRARLKAIKDAKSKD.

The tract at residues 1–233 (MQATPRPLAL…EAETIGINSR (233 aa)) is pyrophosphorylase. UDP-N-acetyl-alpha-D-glucosamine is bound by residues 13–16 (LAAG), K27, Q80, 85–86 (GT), 108–110 (YGD), G145, E159, N174, and N231. D110 is a Mg(2+) binding site. N231 is a Mg(2+) binding site. Residues 234-254 (AELVRAEAQFQSQRRAALIEA) are linker. Positions 255–454 (GVTMQAPDSV…KAIKDAKSKD (200 aa)) are N-acetyltransferase. UDP-N-acetyl-alpha-D-glucosamine is bound by residues R320 and K338. Residue H350 is the Proton acceptor of the active site. Residues Y353 and N364 each contribute to the UDP-N-acetyl-alpha-D-glucosamine site. Residues A367, 373 to 374 (NY), S392, S410, and R427 each bind acetyl-CoA.

In the N-terminal section; belongs to the N-acetylglucosamine-1-phosphate uridyltransferase family. This sequence in the C-terminal section; belongs to the transferase hexapeptide repeat family. In terms of assembly, homotrimer. Mg(2+) serves as cofactor.

The protein localises to the cytoplasm. It catalyses the reaction alpha-D-glucosamine 1-phosphate + acetyl-CoA = N-acetyl-alpha-D-glucosamine 1-phosphate + CoA + H(+). It carries out the reaction N-acetyl-alpha-D-glucosamine 1-phosphate + UTP + H(+) = UDP-N-acetyl-alpha-D-glucosamine + diphosphate. It functions in the pathway nucleotide-sugar biosynthesis; UDP-N-acetyl-alpha-D-glucosamine biosynthesis; N-acetyl-alpha-D-glucosamine 1-phosphate from alpha-D-glucosamine 6-phosphate (route II): step 2/2. Its pathway is nucleotide-sugar biosynthesis; UDP-N-acetyl-alpha-D-glucosamine biosynthesis; UDP-N-acetyl-alpha-D-glucosamine from N-acetyl-alpha-D-glucosamine 1-phosphate: step 1/1. The protein operates within bacterial outer membrane biogenesis; LPS lipid A biosynthesis. Its function is as follows. Catalyzes the last two sequential reactions in the de novo biosynthetic pathway for UDP-N-acetylglucosamine (UDP-GlcNAc). The C-terminal domain catalyzes the transfer of acetyl group from acetyl coenzyme A to glucosamine-1-phosphate (GlcN-1-P) to produce N-acetylglucosamine-1-phosphate (GlcNAc-1-P), which is converted into UDP-GlcNAc by the transfer of uridine 5-monophosphate (from uridine 5-triphosphate), a reaction catalyzed by the N-terminal domain. The chain is Bifunctional protein GlmU from Jannaschia sp. (strain CCS1).